A 192-amino-acid chain; its full sequence is Thiosulfate reductase electron transfer subunit PhsB (192 aa).

4Fe-4S ferredoxin-type domains are found at residues 8 to 36 (YVML…VPEG), 55 to 86 (THFQ…RDEN), and 87 to 116 (GIVQ…LNPQ). Cysteine 17, cysteine 20, cysteine 23, cysteine 27, cysteine 64, cysteine 67, cysteine 72, cysteine 76, cysteine 96, cysteine 99, cysteine 102, cysteine 106, cysteine 123, cysteine 126, cysteine 139, and cysteine 143 together coordinate [4Fe-4S] cluster.

As to quaternary structure, composed of three subunits: PhsA, PhsB and PhsC. [4Fe-4S] cluster is required as a cofactor.

The protein localises to the cell inner membrane. Functionally, component of the PhsABC thiosulfate reductase that catalyzes the reduction of thiosulfate to sulfite and hydrogen sulfide, with menaquinol as the sole electron donor. Proton motive force (PMF) is required to drive transmembrane electron transfer within the reductase. The PhsB subunit transfers electrons between PhsC and PhsA. The chain is Thiosulfate reductase electron transfer subunit PhsB (phsB) from Salmonella typhi.